Reading from the N-terminus, the 548-residue chain is Nodulation protein NolO (548 aa).

This sequence belongs to the NodU/CmcH family.

Involved in 6-O-carbamoylation of Nod-factors. In Bradyrhizobium diazoefficiens (strain JCM 10833 / BCRC 13528 / IAM 13628 / NBRC 14792 / USDA 110), this protein is Nodulation protein NolO (nolO).